The following is a 213-amino-acid chain: NADH dehydrogenase [ubiquinone] iron-sulfur protein 7, mitochondrial (213 aa).

Residues 1 to 38 (MAALSAPGLCGFRILGLRSSVGTAVQARGVHQSVATDG) constitute a mitochondrion transit peptide. Residues 32–53 (QSVATDGPSSTQPALPKARAVA) are disordered. Residues 33-44 (SVATDGPSSTQP) show a composition bias toward polar residues. Residues Cys-88 and Cys-89 each contribute to the [4Fe-4S] cluster site. At Arg-111 the chain carries Hydroxyarginine. [4Fe-4S] cluster contacts are provided by Cys-153 and Cys-183.

The protein belongs to the complex I 20 kDa subunit family. As to quaternary structure, core subunit of respiratory chain NADH dehydrogenase (Complex I) which is composed of 45 different subunits. This is a component of the iron-sulfur (IP) fragment of the enzyme. [4Fe-4S] cluster is required as a cofactor. Post-translationally, hydroxylated ar Arg-111 by NDUFAF5 early in the pathway of assembly of complex I, before the formation of the juncture between peripheral and membrane arms.

It is found in the mitochondrion inner membrane. It carries out the reaction a ubiquinone + NADH + 5 H(+)(in) = a ubiquinol + NAD(+) + 4 H(+)(out). Its function is as follows. Core subunit of the mitochondrial membrane respiratory chain NADH dehydrogenase (Complex I) which catalyzes electron transfer from NADH through the respiratory chain, using ubiquinone as an electron acceptor. Essential for the catalytic activity of complex I. This Gorilla gorilla gorilla (Western lowland gorilla) protein is NADH dehydrogenase [ubiquinone] iron-sulfur protein 7, mitochondrial (NDUFS7).